The following is a 133-amino-acid chain: MPAPSSPRKNQTSFDPEMLLKLVTDSLDDDQALEIATIPLAGKSSIADYMVIASGRSSRQVTAMAQKLADRIKAATGYVSKIEGLPAADWVLLDAGDIIIHLFRPEVRSFYNLERMWGFGDESDQPVSQSVLS.

It belongs to the Iojap/RsfS family. In terms of assembly, interacts with ribosomal protein uL14 (rplN).

The protein localises to the cytoplasm. In terms of biological role, functions as a ribosomal silencing factor. Interacts with ribosomal protein uL14 (rplN), blocking formation of intersubunit bridge B8. Prevents association of the 30S and 50S ribosomal subunits and the formation of functional ribosomes, thus repressing translation. In Zymomonas mobilis subsp. mobilis (strain ATCC 31821 / ZM4 / CP4), this protein is Ribosomal silencing factor RsfS.